A 186-amino-acid polypeptide reads, in one-letter code: MAAARAGVLGVRWLQKAARNVVPLGARTASHITKDMLPGPYPKTPEERAAAAKKYNMRVEDYEPYPDDGTGYGDYPKLPDRSQQERDPWYDWDHPDLRLNWGEPMHWDLDMYIRNRVDTSPTPVNWNLMCKHLFGFVAFMLFMFWVGETYPAYQPVGPKQYPYNNLYLERGGDPNKEPEPVVHYEI.

A mitochondrion-targeting transit peptide spans 1–28; the sequence is MAAARAGVLGVRWLQKAARNVVPLGART. The chain crosses the membrane as a helical span at residues 133 to 153; that stretch reads LFGFVAFMLFMFWVGETYPAY.

Belongs to the complex I NDUFB8 subunit family. As to quaternary structure, complex I is composed of 45 different subunits.

The protein resides in the mitochondrion inner membrane. Accessory subunit of the mitochondrial membrane respiratory chain NADH dehydrogenase (Complex I), that is believed not to be involved in catalysis. Complex I functions in the transfer of electrons from NADH to the respiratory chain. The immediate electron acceptor for the enzyme is believed to be ubiquinone. The protein is NADH dehydrogenase [ubiquinone] 1 beta subcomplex subunit 8, mitochondrial (NDUFB8) of Bos taurus (Bovine).